Here is a 565-residue protein sequence, read N- to C-terminus: MRGAILATAAALAGTAMADVAHMRRHGHDSFHQRRSPLAEADATCGCTTEVVTVWGPPTLIPVASPTPSTVTSEAVTTLHSTSTTTVTVIASASTPAASPSPATDKVPLPTPAITNFPSTGVYTIPATTVTVFDTTTVCGATTTELPAGTHTYGGVTTVVETATTVVCPYATVEPSGTTVTSVIKTTTYVCPSAGTYTIAPTTTTVPTSTVIVYPTPAVITPGTYTQPEQTVTVTRTDYTYVCPFTGQDEPTSAPAAPSTTAVPATTTAAPETTTAAPDTTTAVPSTSSAAPSSSSTAPASTGAVSGQMGMTYTPYTKGGDCKDKSSVLSEVAALKSKGFTHVRVYSTDCNSLEYIGEAARTSGLQMIIGVFISSTGVSGAQDQVTAISKWAQWDLVSLIVVGNEAIQNGYCDASTLAGFISSAKSAFQAAGYTGKVTTTEPINVWQAHGSTLCGVCDIVGANIHPFFNADVSADQAGKFVAQEIKVLESICPGKDVLNLETGWPHAGNANGKAVPGTSEQAIAIKSIADEVGSKSVFFSYFDDLWKEPGQFGVERYWGCFDTFN.

The first 18 residues, 1 to 18 (MRGAILATAAALAGTAMA), serve as a signal peptide directing secretion. Residues 246-304 (TGQDEPTSAPAAPSTTAVPATTTAAPETTTAAPDTTTAVPSTSSAAPSSSSTAPASTGA) are disordered. The segment covering 251–304 (PTSAPAAPSTTAVPATTTAAPETTTAAPDTTTAVPSTSSAAPSSSSTAPASTGA) has biased composition (low complexity). Glu405 (proton donor) is an active-site residue. Glu501 acts as the Nucleophile in catalysis.

This sequence belongs to the glycosyl hydrolase 17 family.

It localises to the secreted. The protein resides in the cell wall. It catalyses the reaction Hydrolysis of terminal, non-reducing beta-D-glucosyl residues with release of beta-D-glucose.. It participates in glycan metabolism; cellulose degradation. Beta-glucosidases are one of a number of cellulolytic enzymes involved in the degradation of cellulosic biomass. Catalyzes the last step releasing glucose from the inhibitory cellobiose. In Aspergillus fumigatus (strain CBS 144.89 / FGSC A1163 / CEA10) (Neosartorya fumigata), this protein is Probable beta-glucosidase btgE (btgE).